We begin with the raw amino-acid sequence, 146 residues long: Hemoglobin subunit beta (146 aa).

The residue at position 1 (V1) is an N-acetylvaline. The Globin domain maps to 2–146; the sequence is HLTAEEKDAV…VANALAHRYH (145 aa). The residue at position 44 (S44) is a Phosphoserine. Residue K59 is modified to N6-acetyllysine. H63 is a binding site for heme b. The residue at position 82 (K82) is an N6-acetyllysine. A heme b-binding site is contributed by H92. C93 bears the S-nitrosocysteine mark.

This sequence belongs to the globin family. As to quaternary structure, heterotetramer of two alpha chains and two beta chains. In terms of tissue distribution, red blood cells.

Involved in oxygen transport from the lung to the various peripheral tissues. The sequence is that of Hemoglobin subunit beta (HBB) from Hippopotamus amphibius (Hippopotamus).